The following is a 356-amino-acid chain: C-C chemokine receptor type 8 (356 aa).

The Extracellular segment spans residues 1–35; the sequence is MDYTLDPSMTTMTDYYYPDSLSSPCDGELIQRNDK. A helical membrane pass occupies residues 36 to 63; sequence LLLAVFYCLLFVFSLLGNSLVILVLVVC. Topologically, residues 64–73 are cytoplasmic; the sequence is KKLRNITDIY. The helical transmembrane segment at 74–93 threads the bilayer; it reads LLNLALSDLLFVFSFPFQTY. The Extracellular portion of the chain corresponds to 94–107; the sequence is YQLDQWVFGTVMCK. The cysteines at positions 106 and 184 are disulfide-linked. The helical transmembrane segment at 108-129 threads the bilayer; the sequence is VVSGFYYIGFYSSMFFITLMSV. The Cytoplasmic portion of the chain corresponds to 130–146; sequence DRYLAVVHAVYAIKVRT. The helical transmembrane segment at 147 to 172 threads the bilayer; it reads IRMGTTTLSLLVWLTAIMATIPLLVF. Residues 173–203 are Extracellular-facing; that stretch reads YQVASEDGVLQCYSFYNQQTLKWKIFTNFEM. Residues 204-223 traverse the membrane as a helical segment; sequence NILGLLIPFTIFMFCYIKIL. Residues 224 to 239 are Cytoplasmic-facing; the sequence is HQLKRCQNHNKTKAIR. A helical membrane pass occupies residues 240 to 264; it reads LVLIVVIASLLFWVPFNVVLFLTSL. The Extracellular segment spans residues 265–281; it reads HSMHILDGCSISQQLNY. A helical membrane pass occupies residues 282–305; sequence ATHVTEIISFTHCCVNPVIYAFVG. Residues 306–356 lie on the Cytoplasmic side of the membrane; it reads EKFKKHLSEIFQKSCSHIFIYLGRQMPRESCEKSSSCQQHSFRSSSIDYIL.

The protein belongs to the G-protein coupled receptor 1 family.

It localises to the cell membrane. Its function is as follows. Receptor for the chemokines CCL1/SCYA1/I-309. May regulate monocyte chemotaxis and thymic cell line apoptosis. This Macaca mulatta (Rhesus macaque) protein is C-C chemokine receptor type 8 (CCR8).